A 449-amino-acid polypeptide reads, in one-letter code: C4-dicarboxylate transport protein (449 aa).

Transmembrane regions (helical) follow at residues 20-42 (YLQL…HCYP), 62-84 (IISP…VGTV), 91-113 (AMVY…AHVV), 164-181 (ILQV…LALA), 202-224 (LVQM…TIGK), 239-261 (SFYL…FSGF), 344-366 (LALF…AGFI), and 370-389 (ATLT…ILGV).

The protein belongs to the dicarboxylate/amino acid:cation symporter (DAACS) (TC 2.A.23) family.

It localises to the cell inner membrane. In terms of biological role, responsible for the transport of dicarboxylates such as succinate, fumarate, and malate from the periplasm across the inner membrane. This is C4-dicarboxylate transport protein (dctA) from Xylella fastidiosa (strain 9a5c).